We begin with the raw amino-acid sequence, 268 residues long: Tryptophan synthase alpha chain (268 aa).

Residues glutamate 49 and aspartate 60 each act as proton acceptor in the active site.

Belongs to the TrpA family. Tetramer of two alpha and two beta chains.

It carries out the reaction (1S,2R)-1-C-(indol-3-yl)glycerol 3-phosphate + L-serine = D-glyceraldehyde 3-phosphate + L-tryptophan + H2O. The protein operates within amino-acid biosynthesis; L-tryptophan biosynthesis; L-tryptophan from chorismate: step 5/5. Its function is as follows. The alpha subunit is responsible for the aldol cleavage of indoleglycerol phosphate to indole and glyceraldehyde 3-phosphate. In Aeromonas hydrophila subsp. hydrophila (strain ATCC 7966 / DSM 30187 / BCRC 13018 / CCUG 14551 / JCM 1027 / KCTC 2358 / NCIMB 9240 / NCTC 8049), this protein is Tryptophan synthase alpha chain.